The primary structure comprises 404 residues: Cysteine desulfurase IscS (404 aa).

Residues 75–76 (AT), Asn155, Gln183, and 203–205 (SAH) each bind pyridoxal 5'-phosphate. Lys206 bears the N6-(pyridoxal phosphate)lysine mark. A pyridoxal 5'-phosphate-binding site is contributed by Thr243. Cys328 (cysteine persulfide intermediate) is an active-site residue. Cys328 contributes to the [2Fe-2S] cluster binding site.

This sequence belongs to the class-V pyridoxal-phosphate-dependent aminotransferase family. NifS/IscS subfamily. As to quaternary structure, homodimer. Forms a heterotetramer with IscU, interacts with other sulfur acceptors. It depends on pyridoxal 5'-phosphate as a cofactor.

It localises to the cytoplasm. The enzyme catalyses (sulfur carrier)-H + L-cysteine = (sulfur carrier)-SH + L-alanine. It participates in cofactor biosynthesis; iron-sulfur cluster biosynthesis. Functionally, master enzyme that delivers sulfur to a number of partners involved in Fe-S cluster assembly, tRNA modification or cofactor biosynthesis. Catalyzes the removal of elemental sulfur atoms from cysteine to produce alanine. Functions as a sulfur delivery protein for Fe-S cluster synthesis onto IscU, an Fe-S scaffold assembly protein, as well as other S acceptor proteins. The polypeptide is Cysteine desulfurase IscS (Vibrio vulnificus (strain YJ016)).